The chain runs to 416 residues: Histidine--tRNA ligase (416 aa).

It belongs to the class-II aminoacyl-tRNA synthetase family. As to quaternary structure, homodimer.

It is found in the cytoplasm. The enzyme catalyses tRNA(His) + L-histidine + ATP = L-histidyl-tRNA(His) + AMP + diphosphate + H(+). This chain is Histidine--tRNA ligase, found in Dictyoglomus thermophilum (strain ATCC 35947 / DSM 3960 / H-6-12).